Reading from the N-terminus, the 259-residue chain is Pyrroloquinoline-quinone synthase (259 aa).

This sequence belongs to the PqqC family.

The enzyme catalyses 6-(2-amino-2-carboxyethyl)-7,8-dioxo-1,2,3,4,7,8-hexahydroquinoline-2,4-dicarboxylate + 3 O2 = pyrroloquinoline quinone + 2 H2O2 + 2 H2O + H(+). The protein operates within cofactor biosynthesis; pyrroloquinoline quinone biosynthesis. Its function is as follows. Ring cyclization and eight-electron oxidation of 3a-(2-amino-2-carboxyethyl)-4,5-dioxo-4,5,6,7,8,9-hexahydroquinoline-7,9-dicarboxylic-acid to PQQ. This Bradyrhizobium sp. (strain ORS 278) protein is Pyrroloquinoline-quinone synthase.